The following is a 205-amino-acid chain: Probable GTP-binding protein EngB (205 aa).

One can recognise an EngB-type G domain in the interval 22-196; the sequence is NLPEVAFVGR…LKVLDEFIHK (175 aa). GTP contacts are provided by residues 30–37, 57–61, 76–79, 143–146, and 175–177; these read GRSNVGKS, GRTQL, DLPG, TKVD, and FSA. Mg(2+) is bound by residues serine 37 and threonine 59.

This sequence belongs to the TRAFAC class TrmE-Era-EngA-EngB-Septin-like GTPase superfamily. EngB GTPase family. Mg(2+) serves as cofactor.

Functionally, necessary for normal cell division and for the maintenance of normal septation. The polypeptide is Probable GTP-binding protein EngB (Desulforamulus reducens (strain ATCC BAA-1160 / DSM 100696 / MI-1) (Desulfotomaculum reducens)).